The primary structure comprises 105 residues: Small ribosomal subunit protein uS10 (105 aa).

The protein belongs to the universal ribosomal protein uS10 family. In terms of assembly, part of the 30S ribosomal subunit.

Its function is as follows. Involved in the binding of tRNA to the ribosomes. In Maridesulfovibrio salexigens (strain ATCC 14822 / DSM 2638 / NCIMB 8403 / VKM B-1763) (Desulfovibrio salexigens), this protein is Small ribosomal subunit protein uS10.